We begin with the raw amino-acid sequence, 665 residues long: Phenol hydroxylase (665 aa).

Residues 18–19, 43–45, 51–56, Gln118, Tyr290, Asp358, and 368–372 each bind FAD; these read PA, DKR, NGQADG, and GQGMN. Residue Asp55 participates in substrate binding. Position 290 (Tyr290) interacts with substrate.

Belongs to the PheA/TfdB FAD monooxygenase family. Homodimer. Requires FAD as cofactor.

It catalyses the reaction phenol + NADPH + O2 + H(+) = catechol + NADP(+) + H2O. It participates in aromatic compound metabolism; phenol degradation. With respect to regulation, inhibited by excess phenol. Heavy metals such AsCuSO(4), AgNO(3), or HgCl(2) severely inhibit activity. Hydroxylates phenol to catechol. Phenol is the best substrate, but the enzyme also accepts isomeric diphenols, hydroxyl-, amino-, halogen- or methyl-substituted phenols and, to a lesser degree, cresols. This chain is Phenol hydroxylase, found in Cutaneotrichosporon cutaneum (Yeast).